The following is a 339-amino-acid chain: Dihydroorotate dehydrogenase (quinone) (339 aa).

Residues 62 to 66 (AGMDK) and Thr86 each bind FMN. A substrate-binding site is contributed by Lys66. 111–115 (NRMGF) lines the substrate pocket. 2 residues coordinate FMN: Asn139 and Asn172. Residue Asn172 participates in substrate binding. Ser175 (nucleophile) is an active-site residue. A substrate-binding site is contributed by Asn177. Positions 217 and 245 each coordinate FMN. 246 to 247 (NT) serves as a coordination point for substrate. FMN-binding positions include Gly268, Gly297, and 318-319 (YS).

It belongs to the dihydroorotate dehydrogenase family. Type 2 subfamily. In terms of assembly, monomer. FMN serves as cofactor.

Its subcellular location is the cell membrane. It carries out the reaction (S)-dihydroorotate + a quinone = orotate + a quinol. Its pathway is pyrimidine metabolism; UMP biosynthesis via de novo pathway; orotate from (S)-dihydroorotate (quinone route): step 1/1. Its function is as follows. Catalyzes the conversion of dihydroorotate to orotate with quinone as electron acceptor. This Shewanella sp. (strain MR-4) protein is Dihydroorotate dehydrogenase (quinone).